Consider the following 477-residue polypeptide: Argininosuccinate lyase (477 aa).

The protein belongs to the lyase 1 family. Argininosuccinate lyase subfamily.

It localises to the cytoplasm. It catalyses the reaction 2-(N(omega)-L-arginino)succinate = fumarate + L-arginine. It functions in the pathway amino-acid biosynthesis; L-arginine biosynthesis; L-arginine from L-ornithine and carbamoyl phosphate: step 3/3. The sequence is that of Argininosuccinate lyase from Corynebacterium glutamicum (strain R).